The following is a 462-amino-acid chain: Proline--tRNA ligase (462 aa).

This sequence belongs to the class-II aminoacyl-tRNA synthetase family. ProS type 3 subfamily. As to quaternary structure, homodimer.

Its subcellular location is the cytoplasm. It carries out the reaction tRNA(Pro) + L-proline + ATP = L-prolyl-tRNA(Pro) + AMP + diphosphate. Its function is as follows. Catalyzes the attachment of proline to tRNA(Pro) in a two-step reaction: proline is first activated by ATP to form Pro-AMP and then transferred to the acceptor end of tRNA(Pro). The polypeptide is Proline--tRNA ligase (Thermoplasma acidophilum (strain ATCC 25905 / DSM 1728 / JCM 9062 / NBRC 15155 / AMRC-C165)).